Consider the following 437-residue polypeptide: Dolichyl-diphosphooligosaccharide--protein glycosyltransferase 48 kDa subunit (437 aa).

A signal peptide spans 1 to 24; the sequence is MASLRVSVLLVAASCLLLGSGLRA. Residues 25–407 lie on the Lumenal side of the membrane; the sequence is GPRTLVLLEN…QYERFIPSAY (383 aa). A helical membrane pass occupies residues 408–428; the sequence is PYYASAFSVMFGLFIFSIVFL. Residues 429–437 are Cytoplasmic-facing; sequence HMKEKEKSD.

This sequence belongs to the DDOST 48 kDa subunit family. Component of the oligosaccharyltransferase (OST) complex.

It is found in the endoplasmic reticulum membrane. Its pathway is protein modification; protein glycosylation. Its function is as follows. Subunit of the oligosaccharyl transferase (OST) complex that catalyzes the initial transfer of a defined glycan (Glc(3)Man(9)GlcNAc(2) in eukaryotes) from the lipid carrier dolichol-pyrophosphate to an asparagine residue within an Asn-X-Ser/Thr consensus motif in nascent polypeptide chains, the first step in protein N-glycosylation. N-glycosylation occurs cotranslationally and the complex associates with the Sec61 complex at the channel-forming translocon complex that mediates protein translocation across the endoplasmic reticulum (ER). All subunits are required for a maximal enzyme activity. Required for the assembly of both SST3A- and SS3B-containing OST complexes. In Xenopus tropicalis (Western clawed frog), this protein is Dolichyl-diphosphooligosaccharide--protein glycosyltransferase 48 kDa subunit.